A 49-amino-acid chain; its full sequence is Large ribosomal subunit protein bL33B (49 aa).

The protein belongs to the bacterial ribosomal protein bL33 family.

The chain is Large ribosomal subunit protein bL33B from Bacillus licheniformis (strain ATCC 14580 / DSM 13 / JCM 2505 / CCUG 7422 / NBRC 12200 / NCIMB 9375 / NCTC 10341 / NRRL NRS-1264 / Gibson 46).